We begin with the raw amino-acid sequence, 855 residues long: E3 ubiquitin-protein ligase TRIM71 (855 aa).

At alanine 2 the chain carries N-acetylalanine. The segment at 12–94 adopts an RING-type zinc-finger fold; it reads CLLCKEMCGS…ALKLRCPVCD (83 aa). Over residues 26 to 42 the composition is skewed to low complexity; it reads SSSSSASSSSSQTSTSS. Disordered stretches follow at residues 26 to 48 and 126 to 177; these read SSSS…GGGP and ADEP…SPGS. Positions 135 to 145 are enriched in gly residues; the sequence is RAGGGPGGAGG. Positions 147 to 157 are enriched in basic residues; that stretch reads SNHRHHAHHPA. The segment at 181-228 adopts a B box-type 1; atypical zinc-finger fold; the sequence is RRPHGCSSCDEGNAASSRCLDCQEHLCDNCVRAHQRVRLTKDHYIERG. The B box-type 2 zinc-finger motif lies at 260 to 301; it reads ERLGFCQHHDDEVLHLYCDTCSVPICRECTLGRHGGHSFAYL. Cysteine 265, histidine 268, cysteine 288, and histidine 293 together coordinate Zn(2+). A coiled-coil region spans residues 378–414; it reads QVKAKSLYLQVEKLRQNLNKLESTISAVQQVLEEGRA. The stretch at 466-567 is one Filamin repeat; that stretch reads SSGAFAPLTK…IENSPFKVVV (102 aa). NHL repeat units lie at residues 580–623, 627–670, 674–717, 721–764, 768–811, and 815–855; these read VLSF…FKPC, HHKF…FTFE, LLKF…FGPD, LNKY…IHPD, ARFL…FEAN, and LCKF…ILIF.

This sequence belongs to the TRIM/RBCC family. In terms of assembly, interacts (via NHL repeats) with AGO2; the interaction increases in presence of RNA. Interacts with HSP90AA1. Interacts (via NHL repeats) with MOV10, PABPC1, PUM1, PUM2, STAU2, XRN1 and XRN2 in an RNA-dependent manner. Interacts with SHCBP1; leading to enhance its stability. Post-translationally, autoubiquitinated.

The protein localises to the cytoplasm. It is found in the P-body. It carries out the reaction S-ubiquitinyl-[E2 ubiquitin-conjugating enzyme]-L-cysteine + [acceptor protein]-L-lysine = [E2 ubiquitin-conjugating enzyme]-L-cysteine + N(6)-ubiquitinyl-[acceptor protein]-L-lysine.. Its pathway is protein modification; protein ubiquitination. E3 ubiquitin-protein ligase that cooperates with the microRNAs (miRNAs) machinery and promotes embryonic stem cells proliferation and maintenance. Binds to miRNAs and associates with AGO2, participating in post-transcriptional repression of transcripts such as CDKN1A. In addition, participates in post-transcriptional mRNA repression in a miRNA independent mechanism. Facilitates the G1-S transition to promote rapid embryonic stem cell self-renewal by repressing CDKN1A expression. Required to maintain proliferation and prevent premature differentiation of neural progenitor cells during early neural development: positively regulates FGF signaling by controlling the stability of SHCBP1. Specific regulator of miRNA biogenesis. Binds to miRNA MIR29A hairpin and postranscriptionally modulates MIR29A levels, which indirectly regulates TET proteins expression. This chain is E3 ubiquitin-protein ligase TRIM71 (Trim71), found in Rattus norvegicus (Rat).